The primary structure comprises 179 residues: Large ribosomal subunit protein uL5 (179 aa).

It belongs to the universal ribosomal protein uL5 family. In terms of assembly, part of the 50S ribosomal subunit; part of the 5S rRNA/L5/L18/L25 subcomplex. Contacts the 5S rRNA and the P site tRNA. Forms a bridge to the 30S subunit in the 70S ribosome.

This is one of the proteins that bind and probably mediate the attachment of the 5S RNA into the large ribosomal subunit, where it forms part of the central protuberance. In the 70S ribosome it contacts protein S13 of the 30S subunit (bridge B1b), connecting the 2 subunits; this bridge is implicated in subunit movement. Contacts the P site tRNA; the 5S rRNA and some of its associated proteins might help stabilize positioning of ribosome-bound tRNAs. The protein is Large ribosomal subunit protein uL5 of Alcanivorax borkumensis (strain ATCC 700651 / DSM 11573 / NCIMB 13689 / SK2).